We begin with the raw amino-acid sequence, 434 residues long: Pectate lyase (434 aa).

Residues 1–22 form the signal peptide; it reads MKAAQFFLYSLLFFASAALSSA. N-linked (GlcNAc...) asparagine glycosylation is found at asparagine 68 and asparagine 97. Residues aspartate 232, aspartate 256, and aspartate 260 each contribute to the Ca(2+) site. Arginine 312 is an active-site residue.

It belongs to the polysaccharide lyase 1 family. Ca(2+) serves as cofactor.

It catalyses the reaction Eliminative cleavage of (1-&gt;4)-alpha-D-galacturonan to give oligosaccharides with 4-deoxy-alpha-D-galact-4-enuronosyl groups at their non-reducing ends.. It participates in glycan metabolism; pectin degradation; 2-dehydro-3-deoxy-D-gluconate from pectin: step 2/5. The chain is Pectate lyase from Lilium longiflorum (Trumpet lily).